The primary structure comprises 367 residues: Probable butyrate kinase (367 aa).

It belongs to the acetokinase family.

The protein localises to the cytoplasm. It carries out the reaction butanoate + ATP = butanoyl phosphate + ADP. The protein is Probable butyrate kinase of Bacillus cereus (strain Q1).